Consider the following 503-residue polypeptide: Dihydropyrimidinase (503 aa).

Residues H66, H68, and K158 each coordinate Zn(2+). K158 is subject to N6-carboxylysine. Substrate is bound at residue Y163. Zn(2+) contacts are provided by H191, H247, and D325. N346 lines the substrate pocket.

It belongs to the metallo-dependent hydrolases superfamily. Hydantoinase/dihydropyrimidinase family. As to quaternary structure, homotetramer. It depends on Zn(2+) as a cofactor. Carboxylation allows a single lysine to coordinate two zinc ions.

The enzyme catalyses 5,6-dihydrouracil + H2O = 3-(carbamoylamino)propanoate + H(+). Its function is as follows. Catalyzes the second step of the reductive pyrimidine degradation, the reversible hydrolytic ring opening of dihydropyrimidines. Can catalyze the ring opening of 5,6-dihydrouracil to N-carbamyl-alanine and of 5,6-dihydrothymine to N-carbamyl-amino isobutyrate. This chain is Dihydropyrimidinase (pyd2), found in Dictyostelium discoideum (Social amoeba).